The chain runs to 407 residues: Imidazolonepropionase (407 aa).

Residues histidine 68 and histidine 70 each coordinate Fe(3+). The Zn(2+) site is built by histidine 68 and histidine 70. 4-imidazolone-5-propanoate-binding residues include arginine 77, tyrosine 140, and histidine 173. Tyrosine 140 is an N-formimidoyl-L-glutamate binding site. Position 238 (histidine 238) interacts with Fe(3+). Histidine 238 is a binding site for Zn(2+). Position 241 (glutamine 241) interacts with 4-imidazolone-5-propanoate. Aspartate 313 contacts Fe(3+). Aspartate 313 contacts Zn(2+). Asparagine 315 and glycine 317 together coordinate N-formimidoyl-L-glutamate. Threonine 318 contacts 4-imidazolone-5-propanoate.

It belongs to the metallo-dependent hydrolases superfamily. HutI family. The cofactor is Zn(2+). It depends on Fe(3+) as a cofactor.

The protein resides in the cytoplasm. The catalysed reaction is 4-imidazolone-5-propanoate + H2O = N-formimidoyl-L-glutamate. Its pathway is amino-acid degradation; L-histidine degradation into L-glutamate; N-formimidoyl-L-glutamate from L-histidine: step 3/3. Its function is as follows. Catalyzes the hydrolytic cleavage of the carbon-nitrogen bond in imidazolone-5-propanoate to yield N-formimidoyl-L-glutamate. It is the third step in the universal histidine degradation pathway. This Burkholderia orbicola (strain MC0-3) protein is Imidazolonepropionase.